A 168-amino-acid polypeptide reads, in one-letter code: MTATRTIGIDPGTARMGWGVVEETDGVLRLVDCGVLTTSAELSQAERLLLLYNELRHLIEQYHPAAAAIEELFFGKNVNTALTVGQARGVVLLTLAQAGIPVYEYKPLQVKQALAGYGGADKRQMQEMVRLTLRLPAIPRPDDAADAVAVAICHTYAAPMIRRIEEGR.

Catalysis depends on residues aspartate 10, glutamate 70, and aspartate 143. Aspartate 10, glutamate 70, and aspartate 143 together coordinate Mg(2+).

This sequence belongs to the RuvC family. In terms of assembly, homodimer which binds Holliday junction (HJ) DNA. The HJ becomes 2-fold symmetrical on binding to RuvC with unstacked arms; it has a different conformation from HJ DNA in complex with RuvA. In the full resolvosome a probable DNA-RuvA(4)-RuvB(12)-RuvC(2) complex forms which resolves the HJ. Mg(2+) is required as a cofactor.

The protein resides in the cytoplasm. The enzyme catalyses Endonucleolytic cleavage at a junction such as a reciprocal single-stranded crossover between two homologous DNA duplexes (Holliday junction).. Its function is as follows. The RuvA-RuvB-RuvC complex processes Holliday junction (HJ) DNA during genetic recombination and DNA repair. Endonuclease that resolves HJ intermediates. Cleaves cruciform DNA by making single-stranded nicks across the HJ at symmetrical positions within the homologous arms, yielding a 5'-phosphate and a 3'-hydroxyl group; requires a central core of homology in the junction. The consensus cleavage sequence is 5'-(A/T)TT(C/G)-3'. Cleavage occurs on the 3'-side of the TT dinucleotide at the point of strand exchange. HJ branch migration catalyzed by RuvA-RuvB allows RuvC to scan DNA until it finds its consensus sequence, where it cleaves and resolves the cruciform DNA. The sequence is that of Crossover junction endodeoxyribonuclease RuvC from Roseiflexus sp. (strain RS-1).